The chain runs to 361 residues: NAD(P)H-quinone oxidoreductase subunit 1, chloroplastic (361 aa).

7 helical membrane-spanning segments follow: residues 28-48 (IWVL…VLVI), 99-119 (FTIG…VIPF), 128-148 (LSIG…GLLM), 249-269 (YSGI…LVSS), 270-290 (LFVT…LFVP), 301-321 (TIIC…ISIA), and 341-361 (FLLP…LLSL).

The protein belongs to the complex I subunit 1 family. In terms of assembly, NDH is composed of at least 16 different subunits, 5 of which are encoded in the nucleus.

The protein resides in the plastid. The protein localises to the chloroplast thylakoid membrane. It carries out the reaction a plastoquinone + NADH + (n+1) H(+)(in) = a plastoquinol + NAD(+) + n H(+)(out). It catalyses the reaction a plastoquinone + NADPH + (n+1) H(+)(in) = a plastoquinol + NADP(+) + n H(+)(out). Its function is as follows. NDH shuttles electrons from NAD(P)H:plastoquinone, via FMN and iron-sulfur (Fe-S) centers, to quinones in the photosynthetic chain and possibly in a chloroplast respiratory chain. The immediate electron acceptor for the enzyme in this species is believed to be plastoquinone. Couples the redox reaction to proton translocation, and thus conserves the redox energy in a proton gradient. This chain is NAD(P)H-quinone oxidoreductase subunit 1, chloroplastic, found in Jasminum nudiflorum (Winter jasmine).